The following is a 326-amino-acid chain: Biotin synthase (326 aa).

The region spanning 50–279 is the Radical SAM core domain; sequence FNGEKVDVEQ…ESVIKISGGR (230 aa). Residues Cys68, Cys72, and Cys75 each coordinate [4Fe-4S] cluster. [2Fe-2S] cluster-binding residues include Cys112, Cys145, Cys204, and Lys274.

Belongs to the radical SAM superfamily. Biotin synthase family. In terms of assembly, homodimer. Requires [4Fe-4S] cluster as cofactor. [2Fe-2S] cluster is required as a cofactor.

The enzyme catalyses (4R,5S)-dethiobiotin + (sulfur carrier)-SH + 2 reduced [2Fe-2S]-[ferredoxin] + 2 S-adenosyl-L-methionine = (sulfur carrier)-H + biotin + 2 5'-deoxyadenosine + 2 L-methionine + 2 oxidized [2Fe-2S]-[ferredoxin]. Its pathway is cofactor biosynthesis; biotin biosynthesis; biotin from 7,8-diaminononanoate: step 2/2. Functionally, catalyzes the conversion of dethiobiotin (DTB) to biotin by the insertion of a sulfur atom into dethiobiotin via a radical-based mechanism. In Nitrosopumilus maritimus (strain SCM1), this protein is Biotin synthase.